The following is a 584-amino-acid chain: uncharacterized protein (584 aa).

A helical transmembrane segment spans residues 15 to 35 (FIFFVLVFFICIIFGCIYESL). Composition is skewed to polar residues over residues 184–194 (DVSTENSYTHN) and 204–225 (GKRT…SYNI). A disordered region spans residues 184–226 (DVSTENSYTHNNSRDDEPQNGKRTYNNQSNNNLPYDNSSYNIS). Coiled-coil stretches lie at residues 267–319 (DNYP…DNYP) and 436–477 (RDNH…HYKR).

It localises to the membrane. This is an uncharacterized protein from Plasmodium falciparum (isolate 3D7).